Consider the following 355-residue polypeptide: Hyaluronan and proteoglycan link protein 1 (355 aa).

The propeptide occupies 1-9 (MTSLLFLVL). Asn21 and Asn56 each carry an N-linked (GlcNAc...) asparagine glycan. In terms of domain architecture, Ig-like V-type spans 38-156 (PRLLVVAEQA…EDDTAVVALN (119 aa)). Cystine bridges form between Cys61/Cys140, Cys182/Cys253, Cys206/Cys227, Cys280/Cys350, and Cys305/Cys326. 2 consecutive Link domains span residues 160–255 (VVFP…FCFT) and 260–352 (GRFY…YCFR).

Belongs to the HAPLN family.

Its subcellular location is the secreted. The protein localises to the extracellular space. The protein resides in the extracellular matrix. Stabilizes the aggregates of proteoglycan monomers with hyaluronic acid in the extracellular cartilage matrix. In Gallus gallus (Chicken), this protein is Hyaluronan and proteoglycan link protein 1 (HAPLN1).